Here is a 539-residue protein sequence, read N- to C-terminus: CTP synthase (539 aa).

The tract at residues 1–267 is amidoligase domain; it reads MKEAKFIFVT…GTQVLEHFHL (267 aa). Ser15 is a CTP binding site. Ser15 contacts UTP. Residues 16 to 21 and Asp73 contribute to the ATP site; that span reads SLGKGL. Positions 73 and 141 each coordinate Mg(2+). Residues 148–150, 188–193, and Lys224 each bind CTP; these read DIE and KTKPTQ. UTP-binding positions include 188-193 and Lys224; that span reads KTKPTQ. Residues 292-536 enclose the Glutamine amidotransferase type-1 domain; sequence TVSIVGKYTE…IKAVVNKVKK (245 aa). Gly359 is a binding site for L-glutamine. The active-site Nucleophile; for glutamine hydrolysis is Cys386. L-glutamine contacts are provided by residues 387-390, Glu410, and Arg464; that span reads LGMQ. Catalysis depends on residues His509 and Glu511.

This sequence belongs to the CTP synthase family. As to quaternary structure, homotetramer.

It carries out the reaction UTP + L-glutamine + ATP + H2O = CTP + L-glutamate + ADP + phosphate + 2 H(+). The catalysed reaction is L-glutamine + H2O = L-glutamate + NH4(+). The enzyme catalyses UTP + NH4(+) + ATP = CTP + ADP + phosphate + 2 H(+). The protein operates within pyrimidine metabolism; CTP biosynthesis via de novo pathway; CTP from UDP: step 2/2. Its activity is regulated as follows. Allosterically activated by GTP, when glutamine is the substrate; GTP has no effect on the reaction when ammonia is the substrate. The allosteric effector GTP functions by stabilizing the protein conformation that binds the tetrahedral intermediate(s) formed during glutamine hydrolysis. Inhibited by the product CTP, via allosteric rather than competitive inhibition. Catalyzes the ATP-dependent amination of UTP to CTP with either L-glutamine or ammonia as the source of nitrogen. Regulates intracellular CTP levels through interactions with the four ribonucleotide triphosphates. This is CTP synthase from Wolbachia sp. subsp. Brugia malayi (strain TRS).